We begin with the raw amino-acid sequence, 1368 residues long: DNA-directed RNA polymerase subunit beta (1368 aa).

The protein belongs to the RNA polymerase beta chain family. In terms of assembly, the RNAP catalytic core consists of 2 alpha, 1 beta, 1 beta' and 1 omega subunit. When a sigma factor is associated with the core the holoenzyme is formed, which can initiate transcription.

It carries out the reaction RNA(n) + a ribonucleoside 5'-triphosphate = RNA(n+1) + diphosphate. In terms of biological role, DNA-dependent RNA polymerase catalyzes the transcription of DNA into RNA using the four ribonucleoside triphosphates as substrates. This is DNA-directed RNA polymerase subunit beta from Burkholderia lata (strain ATCC 17760 / DSM 23089 / LMG 22485 / NCIMB 9086 / R18194 / 383).